Here is a 1133-residue protein sequence, read N- to C-terminus: Early transcription factor large subunit homolog (1133 aa).

Residues 52–352 (KGGRAFFPCD…PNGQPLQRQQ (301 aa)) enclose the Helicase ATP-binding domain. Residue 99–106 (WQTGTGKS) participates in ATP binding. A DEAH box motif is present at residues 281-284 (DEIH). Residues 524 to 724 (MMKDILSIIR…EGDKALRKHA (201 aa)) form the Helicase C-terminal domain.

This sequence belongs to the DEAD box helicase family. DEAH subfamily.

It is found in the virion. It carries out the reaction ATP + H2O = ADP + phosphate + H(+). Putative initation factor. In African swine fever virus (isolate Tick/South Africa/Pretoriuskop Pr4/1996) (ASFV), this protein is Early transcription factor large subunit homolog.